We begin with the raw amino-acid sequence, 142 residues long: Putative pre-16S rRNA nuclease (142 aa).

It belongs to the YqgF nuclease family.

It is found in the cytoplasm. Its function is as follows. Could be a nuclease involved in processing of the 5'-end of pre-16S rRNA. This Mycoplasmoides gallisepticum (strain R(low / passage 15 / clone 2)) (Mycoplasma gallisepticum) protein is Putative pre-16S rRNA nuclease.